Here is a 938-residue protein sequence, read N- to C-terminus: AP-4 complex subunit epsilon (938 aa).

HEAT repeat units lie at residues 118-153, 154-190, 192-227, 234-272, 321-358, 359-395, 397-431, 454-495, 517-556, and 562-601; these read DLII…INEE, TIPA…KSPS, VSHL…EDVN, SSFV…IMAL, KLLE…ISPD, IAEQ…SSNV, VIVD…QFAP, KVAH…EPKL, YSAS…FEIA, and DVLP…RAVE. 4 disordered regions span residues 690-712, 725-867, 880-912, and 919-938; these read EPSY…RESS, WGRP…VMGL, VDSL…KEAL, and RQMG…DLLG. Residues 694-706 are compositionally biased toward polar residues; the sequence is YSESHQPISTSLV. Over residues 728 to 744 the composition is skewed to low complexity; it reads PSYQSTTAASSTTPQAA. Over residues 764-779 the composition is skewed to basic and acidic residues; that stretch reads SSYEPKKPEIDPEKQR. A compositionally biased stretch (polar residues) spans 808–821; sequence ANKTATVPKENQTP. Composition is skewed to low complexity over residues 853–863 and 880–891; these read DSSSQDGGSSD and VDSLLSELSDSS. The stretch at 874-911 is one HEAT 11 repeat; that stretch reads VTTTTSVDSLLSELSDSSKGNSRTYQPQTSKGPNTKEA. Over residues 892 to 906 the composition is skewed to polar residues; sequence KGNSRTYQPQTSKGP.

This sequence belongs to the adaptor complexes large subunit family. Adaptor protein complex 4 (AP-4) is a heterotetramer composed of two large adaptins (epsilon-type subunit and beta-type subunit), a medium adaptin (mu-type subunit) and a small adaptin (sigma-type subunit).

The protein resides in the golgi apparatus. It localises to the trans-Golgi network. It is found in the membrane. The protein localises to the coated pit. In terms of biological role, subunit of novel type of clathrin- or non-clathrin-associated protein coat involved in targeting proteins from the trans-Golgi network (TGN) to the endosomal-lysosomal system. The sequence is that of AP-4 complex subunit epsilon from Arabidopsis thaliana (Mouse-ear cress).